The sequence spans 484 residues: Glutamate--tRNA ligase (484 aa).

The 'HIGH' region motif lies at 11–21; sequence PSPTGYLHIGN. Positions 252–256 match the 'KMSKS' region motif; it reads KLSKR. An ATP-binding site is contributed by Lys-255.

The protein belongs to the class-I aminoacyl-tRNA synthetase family. Glutamate--tRNA ligase type 1 subfamily. In terms of assembly, monomer.

It is found in the cytoplasm. The catalysed reaction is tRNA(Glu) + L-glutamate + ATP = L-glutamyl-tRNA(Glu) + AMP + diphosphate. Functionally, catalyzes the attachment of glutamate to tRNA(Glu) in a two-step reaction: glutamate is first activated by ATP to form Glu-AMP and then transferred to the acceptor end of tRNA(Glu). The chain is Glutamate--tRNA ligase from Staphylococcus aureus (strain MRSA252).